Reading from the N-terminus, the 159-residue chain is Transcription elongation factor GreA (159 aa).

Residues 5–77 are a coiled coil; sequence REVVLTAQGL…LETMLRKAVI (73 aa).

This sequence belongs to the GreA/GreB family.

Its function is as follows. Necessary for efficient RNA polymerase transcription elongation past template-encoded arresting sites. The arresting sites in DNA have the property of trapping a certain fraction of elongating RNA polymerases that pass through, resulting in locked ternary complexes. Cleavage of the nascent transcript by cleavage factors such as GreA or GreB allows the resumption of elongation from the new 3'terminus. GreA releases sequences of 2 to 3 nucleotides. The chain is Transcription elongation factor GreA from Alkaliphilus oremlandii (strain OhILAs) (Clostridium oremlandii (strain OhILAs)).